Here is a 561-residue protein sequence, read N- to C-terminus: DNA ligase B (561 aa).

The active-site N6-AMP-lysine intermediate is lysine 125.

Belongs to the NAD-dependent DNA ligase family. LigB subfamily.

It carries out the reaction NAD(+) + (deoxyribonucleotide)n-3'-hydroxyl + 5'-phospho-(deoxyribonucleotide)m = (deoxyribonucleotide)n+m + AMP + beta-nicotinamide D-nucleotide.. In terms of biological role, catalyzes the formation of phosphodiester linkages between 5'-phosphoryl and 3'-hydroxyl groups in double-stranded DNA using NAD as a coenzyme and as the energy source for the reaction. The chain is DNA ligase B from Salmonella heidelberg (strain SL476).